Here is a 471-residue protein sequence, read N- to C-terminus: Glutamate--tRNA ligase (471 aa).

Residues 9 to 19 carry the 'HIGH' region motif; sequence PSPTGYLHVGG. Cys-98, Cys-100, Cys-125, and His-127 together coordinate Zn(2+). Residues 237–241 carry the 'KMSKS' region motif; sequence KLSKR. Lys-240 contributes to the ATP binding site.

This sequence belongs to the class-I aminoacyl-tRNA synthetase family. Glutamate--tRNA ligase type 1 subfamily. In terms of assembly, monomer. The cofactor is Zn(2+).

The protein resides in the cytoplasm. It catalyses the reaction tRNA(Glu) + L-glutamate + ATP = L-glutamyl-tRNA(Glu) + AMP + diphosphate. Functionally, catalyzes the attachment of glutamate to tRNA(Glu) in a two-step reaction: glutamate is first activated by ATP to form Glu-AMP and then transferred to the acceptor end of tRNA(Glu). The sequence is that of Glutamate--tRNA ligase from Salmonella paratyphi A (strain ATCC 9150 / SARB42).